The following is a 454-amino-acid chain: Phosphoglucosamine mutase (454 aa).

Catalysis depends on S101, which acts as the Phosphoserine intermediate. Mg(2+) contacts are provided by S101, D243, D245, and D247. The residue at position 101 (S101) is a Phosphoserine.

The protein belongs to the phosphohexose mutase family. The cofactor is Mg(2+). In terms of processing, activated by phosphorylation.

The catalysed reaction is alpha-D-glucosamine 1-phosphate = D-glucosamine 6-phosphate. In terms of biological role, catalyzes the conversion of glucosamine-6-phosphate to glucosamine-1-phosphate. This is Phosphoglucosamine mutase from Geotalea uraniireducens (strain Rf4) (Geobacter uraniireducens).